Consider the following 130-residue polypeptide: Hypocretin neuropeptide precursor (130 aa).

The signal sequence occupies residues 1–32 (MNPPSTKVPWAAVTLLLLLLLPPALLSPGAAA). Gln-33 is modified (pyrrolidone carboxylic acid). 2 cysteine pairs are disulfide-bonded: Cys-38-Cys-44 and Cys-39-Cys-46. Leu-65 bears the Leucine amide mark. Methionine amide is present on Met-96. A propeptide spans 97 to 130 (GRRAGAEPAPRPCPGRRCPVVAVPSAAPGGRSGV) (removed in mature form).

Belongs to the orexin family. Post-translationally, specific enzymatic cleavages at paired basic residues yield the different active peptides.

It localises to the rough endoplasmic reticulum. The protein localises to the cytoplasmic vesicle. It is found in the synapse. Functionally, neuropeptides that play a significant role in the regulation of food intake and sleep-wakefulness, possibly by coordinating the complex behavioral and physiologic responses of these complementary homeostatic functions. A broader role in the homeostatic regulation of energy metabolism, autonomic function, hormonal balance and the regulation of body fluids, is also suggested. In terms of biological role, binds to orexin receptors HCRTR1/OX1R and HCRTR2/OX2R with a high affinity. Stimulates food intake. Modulates pituitary luteinizing hormone secretion in an ovarian steroid-dependent manner. Its function is as follows. Binds to orexin receptor HCRTR2/OX2R only. Stimulates food intake. Modulates pituitary luteinizing hormone secretion in an ovarian steroid-dependent manner. The polypeptide is Hypocretin neuropeptide precursor (HCRT) (Canis lupus familiaris (Dog)).